We begin with the raw amino-acid sequence, 224 residues long: Charged multivesicular body protein 4c (224 aa).

2 disordered regions span residues 1-21 and 182-224; these read MSVF…PTPQ and SGPE…AWAM. A compositionally biased stretch (gly residues) spans 7–17; that stretch reads LFGGGGKGGKG. A coiled-coil region spans residues 21-221; that stretch reads QEAIQKLRET…DEDDMEELKA (201 aa).

The protein belongs to the SNF7 family. In terms of assembly, probable core component of the endosomal sorting required for transport complex III (ESCRT-III). ESCRT-III components are thought to multimerize to form a flat lattice on the perimeter membrane of the endosome.

It is found in the cytoplasm. It localises to the cytosol. Its subcellular location is the late endosome membrane. Its function is as follows. Probable core component of the endosomal sorting required for transport complex III (ESCRT-III) which is involved in multivesicular bodies (MVBs) formation and sorting of endosomal cargo proteins into MVBs. MVBs contain intraluminal vesicles (ILVs) that are generated by invagination and scission from the limiting membrane of the endosome and mostly are delivered to lysosomes enabling degradation of membrane proteins, such as stimulated growth factor receptors, lysosomal enzymes and lipids. Key component of the cytokinesis checkpoint, a process required to delay abscission to prevent both premature resolution of intercellular chromosome bridges and accumulation of DNA damage. The protein is Charged multivesicular body protein 4c (chmp4c) of Danio rerio (Zebrafish).